The sequence spans 283 residues: Ribosome biogenesis GTPase A (283 aa).

The region spanning 14–178 (RREVTEKLKL…LLDTPGILWP (165 aa)) is the CP-type G domain. GTP-binding positions include 58–61 (NKAD), 86–87 (NS), 130–135 (NVGKST), and Gly-174.

The protein belongs to the TRAFAC class YlqF/YawG GTPase family. MTG1 subfamily. Interacts with ctc. Interacts with the immature 50S ribosome subunit. 2 molecules of rbgA bind to one 50S subunit.

It is found in the cytoplasm. Essential protein that is required for a late step of 50S ribosomal subunit assembly. Has GTPase activity that is stimulated by interaction with the immature 50S ribosome subunit. Binds to the 23S rRNA. Required for the association of ribosomal proteins rplP and rpmA with the large subunit. The chain is Ribosome biogenesis GTPase A from Bacillus licheniformis (strain ATCC 14580 / DSM 13 / JCM 2505 / CCUG 7422 / NBRC 12200 / NCIMB 9375 / NCTC 10341 / NRRL NRS-1264 / Gibson 46).